Here is a 444-residue protein sequence, read N- to C-terminus: Phosphoglucosamine mutase (444 aa).

Ser-102 acts as the Phosphoserine intermediate in catalysis. Residues Ser-102, Asp-241, Asp-243, and Asp-245 each coordinate Mg(2+). A Phosphoserine modification is found at Ser-102.

This sequence belongs to the phosphohexose mutase family. It depends on Mg(2+) as a cofactor. Post-translationally, activated by phosphorylation.

It carries out the reaction alpha-D-glucosamine 1-phosphate = D-glucosamine 6-phosphate. Its function is as follows. Catalyzes the conversion of glucosamine-6-phosphate to glucosamine-1-phosphate. This chain is Phosphoglucosamine mutase, found in Paracidovorax citrulli (strain AAC00-1) (Acidovorax citrulli).